We begin with the raw amino-acid sequence, 92 residues long: MALEEKERIIIPDENGDEHLFEVLFTFDVDETEQSYIAVVPAEQAEEEEVEVYAFRFEEQENEDFTLFPIESDDEWQMVEEMLNTLAEEEEA.

Belongs to the UPF0473 family.

This is UPF0473 protein OB2006 from Oceanobacillus iheyensis (strain DSM 14371 / CIP 107618 / JCM 11309 / KCTC 3954 / HTE831).